A 474-amino-acid chain; its full sequence is Cysteine--tRNA ligase (474 aa).

C30 contacts Zn(2+). The 'HIGH' region motif lies at 32-42; that stretch reads PTVYNFAHIGN. Zn(2+)-binding residues include C212, H237, and E241. The short motif at 270-274 is the 'KMSKS' region element; it reads KMSKS. ATP is bound at residue K273.

This sequence belongs to the class-I aminoacyl-tRNA synthetase family. In terms of assembly, monomer. The cofactor is Zn(2+).

It localises to the cytoplasm. The catalysed reaction is tRNA(Cys) + L-cysteine + ATP = L-cysteinyl-tRNA(Cys) + AMP + diphosphate. This Leptospira borgpetersenii serovar Hardjo-bovis (strain JB197) protein is Cysteine--tRNA ligase.